Reading from the N-terminus, the 229-residue chain is Orotidine 5'-phosphate decarboxylase (229 aa).

Substrate contacts are provided by residues Asp12, Lys34, 61–70 (DWKLHDIGAT), Thr116, Arg177, Gln186, Gly206, and Arg207. The active-site Proton donor is the Lys63.

Belongs to the OMP decarboxylase family. Type 1 subfamily. Homodimer.

The enzyme catalyses orotidine 5'-phosphate + H(+) = UMP + CO2. It functions in the pathway pyrimidine metabolism; UMP biosynthesis via de novo pathway; UMP from orotate: step 2/2. Catalyzes the decarboxylation of orotidine 5'-monophosphate (OMP) to uridine 5'-monophosphate (UMP). This is Orotidine 5'-phosphate decarboxylase from Caulobacter sp. (strain K31).